A 152-amino-acid polypeptide reads, in one-letter code: Large ribosomal subunit protein bL9 (152 aa).

This sequence belongs to the bacterial ribosomal protein bL9 family.

Binds to the 23S rRNA. This Parasynechococcus marenigrum (strain WH8102) protein is Large ribosomal subunit protein bL9.